Consider the following 160-residue polypeptide: Transcription antitermination protein NusB (160 aa).

The protein belongs to the NusB family.

Involved in transcription antitermination. Required for transcription of ribosomal RNA (rRNA) genes. Binds specifically to the boxA antiterminator sequence of the ribosomal RNA (rrn) operons. The protein is Transcription antitermination protein NusB of Sinorhizobium medicae (strain WSM419) (Ensifer medicae).